The primary structure comprises 234 residues: ATP-dependent dethiobiotin synthetase BioD (234 aa).

12-17 (DVGKTF) contributes to the ATP binding site. Residue threonine 16 coordinates Mg(2+). Lysine 37 is an active-site residue. A substrate-binding site is contributed by serine 41. ATP is bound by residues aspartate 52, 118-121 (EGAG), and 178-179 (SQ). Aspartate 52 and glutamate 118 together coordinate Mg(2+).

It belongs to the dethiobiotin synthetase family. Homodimer. Requires Mg(2+) as cofactor.

Its subcellular location is the cytoplasm. It carries out the reaction (7R,8S)-7,8-diammoniononanoate + CO2 + ATP = (4R,5S)-dethiobiotin + ADP + phosphate + 3 H(+). Its pathway is cofactor biosynthesis; biotin biosynthesis; biotin from 7,8-diaminononanoate: step 1/2. Catalyzes a mechanistically unusual reaction, the ATP-dependent insertion of CO2 between the N7 and N8 nitrogen atoms of 7,8-diaminopelargonic acid (DAPA, also called 7,8-diammoniononanoate) to form a ureido ring. This chain is ATP-dependent dethiobiotin synthetase BioD, found in Phenylobacterium zucineum (strain HLK1).